We begin with the raw amino-acid sequence, 270 residues long: Putative F-box protein At3g24700 (270 aa).

Residues 1-45 (MLTDLPLDLESEILSRVPATSLQRLKTTCKRWYALFRDPRFVKKN) enclose the F-box domain.

This is Putative F-box protein At3g24700 from Arabidopsis thaliana (Mouse-ear cress).